The chain runs to 265 residues: Cytochrome c oxidase subunit 3 (265 aa).

A run of 6 helical transmembrane segments spans residues 41-61 (GGARLLSLGLIFILYTMFVWW), 85-105 (GFILFIVSEVMFFFAFFWAFF), 137-157 (TLILLSSGAAVTWAHHAILAG), 162-182 (AVYALVATVLLALVFTGFQGM), 200-220 (FFLATGFHGFHVIIGTLFLII), and 245-265 (WHFVDVVWLFLFVSIYWWGGI).

Belongs to the cytochrome c oxidase subunit 3 family. As to quaternary structure, component of the cytochrome c oxidase (complex IV, CIV), a multisubunit enzyme composed of a catalytic core of 3 subunits and several supernumerary subunits. The complex exists as a monomer or a dimer and forms supercomplexes (SCs) in the inner mitochondrial membrane with ubiquinol-cytochrome c oxidoreductase (cytochrome b-c1 complex, complex III, CIII).

Its subcellular location is the mitochondrion inner membrane. The catalysed reaction is 4 Fe(II)-[cytochrome c] + O2 + 8 H(+)(in) = 4 Fe(III)-[cytochrome c] + 2 H2O + 4 H(+)(out). Its function is as follows. Component of the cytochrome c oxidase, the last enzyme in the mitochondrial electron transport chain which drives oxidative phosphorylation. The respiratory chain contains 3 multisubunit complexes succinate dehydrogenase (complex II, CII), ubiquinol-cytochrome c oxidoreductase (cytochrome b-c1 complex, complex III, CIII) and cytochrome c oxidase (complex IV, CIV), that cooperate to transfer electrons derived from NADH and succinate to molecular oxygen, creating an electrochemical gradient over the inner membrane that drives transmembrane transport and the ATP synthase. Cytochrome c oxidase is the component of the respiratory chain that catalyzes the reduction of oxygen to water. Electrons originating from reduced cytochrome c in the intermembrane space (IMS) are transferred via the dinuclear copper A center (CU(A)) of subunit 2 and heme A of subunit 1 to the active site in subunit 1, a binuclear center (BNC) formed by heme A3 and copper B (CU(B)). The BNC reduces molecular oxygen to 2 water molecules using 4 electrons from cytochrome c in the IMS and 4 protons from the mitochondrial matrix. This is Cytochrome c oxidase subunit 3 (COX3) from Arabidopsis thaliana (Mouse-ear cress).